The sequence spans 391 residues: Transmembrane protein 79 (391 aa).

Residues 1–114 (MTEPETLALL…TKSEEPFKED (114 aa)) form a disordered region. The Cytoplasmic segment spans residues 1 to 200 (MTEPETLALL…GREALRAVAS (200 aa)). Basic and acidic residues predominate over residues 103-114 (APTKSEEPFKED). Residues 201–221 (VVAALIFFPCLLYGAYAFLPF) traverse the membrane as a helical segment. The Extracellular portion of the chain corresponds to 222–240 (DAPRLPTMSSRLVYTLRCG). A helical transmembrane segment spans residues 241-261 (VFATFPIVLGLLVYGLSLLCF). The Cytoplasmic segment spans residues 262–279 (SALRPFGEPRREVEIHRQ). The chain crosses the membrane as a helical span at residues 280–300 (YVAQSVQLFILYFFNLAVLST). Over 301–309 (YLPQDTLKL) the chain is Extracellular. The chain crosses the membrane as a helical span at residues 310–330 (LPLLTGLFAISRLIYWLTFAV). Topologically, residues 331 to 339 (GRSFRGFGY) are cytoplasmic. The helical transmembrane segment at 340-360 (GLTFLPLLAMLVWNLYYMFVV) threads the bilayer. At 361-391 (EPERMLTASESRLDYPDHARSVSDYRPRSWG) the chain is on the extracellular side.

Expressed in the epidermis of the skin. Expressed in epithelial cells of the outermost layer of the stratum granulosum (SG) and in hair follicles (at protein level).

It localises to the lysosome. Its subcellular location is the golgi apparatus. The protein resides in the trans-Golgi network. The protein localises to the membrane. Contributes to the epidermal integrity and skin barrier function. Plays a role in the lamellar granule (LG) secretory system and in the stratum corneum (SC) epithelial cell formation. This chain is Transmembrane protein 79 (Tmem79), found in Mus musculus (Mouse).